The following is a 137-amino-acid chain: Molluscan insulin-related peptide 2 (137 aa).

The N-terminal stretch at 1–31 (MVGVRLVFTNAFVVTVLLTLLLDVVVKPAEG) is a signal peptide. Residue glutamine 32 is modified to Pyrrolidone carboxylic acid. 3 disulfide bridges follow: cysteine 47-cysteine 123, cysteine 59-cysteine 136, and cysteine 122-cysteine 127. Residues 71-83 (DAETGWLLPETMV) constitute a propeptide, C-beta peptide like. A propeptide spans 86–110 (NAETDLDDPLRNIKLSSESALTYLT) (C-alpha peptide like). Glutamine 113 carries the pyrrolidone carboxylic acid modification.

This sequence belongs to the insulin family. As to quaternary structure, heterodimer of a B chain and an A chain linked by two disulfide bonds. As to expression, expressed in the cerebral light-green cells which are giant neuroendocrines cells involved in the control of growth.

The protein localises to the cytoplasmic vesicle. Its subcellular location is the secretory vesicle. This is Molluscan insulin-related peptide 2 from Lymnaea stagnalis (Great pond snail).